A 156-amino-acid polypeptide reads, in one-letter code: Homeobox-leucine zipper protein ATHB-52 (156 aa).

Residues 8–67 (GKNKKKRLTQDQVRQLEKCFTMNKKLEPDLKLQLSNQLGLPQRQVAVWFQNKRARFKTQS) constitute a DNA-binding region (homeobox). Positions 68–96 (LEVQHCTLQSKHEAALSDKAKLEHQVQFL) are leucine-zipper.

Belongs to the HD-ZIP homeobox family. Class I subfamily. Expressed in roots and flowers.

Its subcellular location is the nucleus. Functionally, probable transcription factor. The chain is Homeobox-leucine zipper protein ATHB-52 (ATHB-52) from Arabidopsis thaliana (Mouse-ear cress).